A 507-amino-acid chain; its full sequence is ATP synthase subunit alpha, chloroplastic (507 aa).

ATP is bound at residue 170-177; the sequence is GDRQTGKT.

Belongs to the ATPase alpha/beta chains family. In terms of assembly, F-type ATPases have 2 components, CF(1) - the catalytic core - and CF(0) - the membrane proton channel. CF(1) has five subunits: alpha(3), beta(3), gamma(1), delta(1), epsilon(1). CF(0) has four main subunits: a, b, b' and c.

It localises to the plastid. It is found in the chloroplast thylakoid membrane. The enzyme catalyses ATP + H2O + 4 H(+)(in) = ADP + phosphate + 5 H(+)(out). In terms of biological role, produces ATP from ADP in the presence of a proton gradient across the membrane. The alpha chain is a regulatory subunit. This Acorus calamus var. americanus (American sweet flag) protein is ATP synthase subunit alpha, chloroplastic.